The chain runs to 286 residues: ATP synthase gamma chain (286 aa).

This sequence belongs to the ATPase gamma chain family. As to quaternary structure, F-type ATPases have 2 components, CF(1) - the catalytic core - and CF(0) - the membrane proton channel. CF(1) has five subunits: alpha(3), beta(3), gamma(1), delta(1), epsilon(1). CF(0) has three main subunits: a, b and c.

It localises to the cell inner membrane. Produces ATP from ADP in the presence of a proton gradient across the membrane. The gamma chain is believed to be important in regulating ATPase activity and the flow of protons through the CF(0) complex. This Shewanella woodyi (strain ATCC 51908 / MS32) protein is ATP synthase gamma chain.